Reading from the N-terminus, the 191-residue chain is Fe/S biogenesis protein NfuA (191 aa).

[4Fe-4S] cluster contacts are provided by Cys149 and Cys152.

This sequence belongs to the NfuA family. Homodimer. It depends on [4Fe-4S] cluster as a cofactor.

In terms of biological role, involved in iron-sulfur cluster biogenesis. Binds a 4Fe-4S cluster, can transfer this cluster to apoproteins, and thereby intervenes in the maturation of Fe/S proteins. Could also act as a scaffold/chaperone for damaged Fe/S proteins. This is Fe/S biogenesis protein NfuA from Citrobacter koseri (strain ATCC BAA-895 / CDC 4225-83 / SGSC4696).